A 200-amino-acid chain; its full sequence is Small ribosomal subunit protein uS4c (200 aa).

The segment at 20–42 (GLTRKTTTRTSRPGQHGTQARKP) is disordered. Polar residues predominate over residues 23–37 (RKTTTRTSRPGQHGT). An S4 RNA-binding domain is found at 90-152 (MRLDNVIFRL…PKSQSIVKNY (63 aa)).

The protein belongs to the universal ribosomal protein uS4 family. Part of the 30S ribosomal subunit. Contacts protein S5. The interaction surface between S4 and S5 is involved in control of translational fidelity.

The protein resides in the plastid. Its subcellular location is the chloroplast. Functionally, one of the primary rRNA binding proteins, it binds directly to 16S rRNA where it nucleates assembly of the body of the 30S subunit. In terms of biological role, with S5 and S12 plays an important role in translational accuracy. This Guillardia theta (Cryptophyte) protein is Small ribosomal subunit protein uS4c (rps4).